Consider the following 349-residue polypeptide: Putative F-box/LRR-repeat protein At3g16555 (349 aa).

Residues 1-48 (MVLLPWELEEDILSRLPPRSLVQFRSVCKRWNALFDVKSFNKDQFARA) form the F-box domain. The stretch at 267–290 (VVWISLLTLPPNNLPNLFIVCYGI) is one LRR repeat.

The protein is Putative F-box/LRR-repeat protein At3g16555 of Arabidopsis thaliana (Mouse-ear cress).